We begin with the raw amino-acid sequence, 256 residues long: Probable ABC transporter ATP-binding protein spyM18_0273 (256 aa).

The ABC transporter domain occupies Leu4–Gln246. Residue Gly36–Ser43 participates in ATP binding.

The protein belongs to the ABC transporter superfamily. Ycf16 family.

The protein resides in the cell membrane. The polypeptide is Probable ABC transporter ATP-binding protein spyM18_0273 (Streptococcus pyogenes serotype M18 (strain MGAS8232)).